A 487-amino-acid polypeptide reads, in one-letter code: DEAD-box ATP-dependent RNA helicase CshA (487 aa).

The Q motif signature appears at 3–31 (ITFQDFQLSSDLTKAIKRMGFEEATPIQA). The 171-residue stretch at 34 to 204 (IPLGLANKDV…ERFMTNPEHV (171 aa)) folds into the Helicase ATP-binding domain. 47 to 54 (AQTGTGKT) is a binding site for ATP. Positions 152-155 (DEAD) match the DEAD box motif. In terms of domain architecture, Helicase C-terminal spans 215–375 (NIQQFYLEVH…RMKAPTLDEA (161 aa)). Residues 428-440 (DNTPVRLTEEAPL) are compositionally biased toward basic and acidic residues. The interval 428–487 (DNTPVRLTEEAPLRTKRNKNHHHRSSKRRDGGGYRGKNNRSSYDKKRSSNDRRQKKSYNS) is disordered. The span at 441–454 (RTKRNKNHHHRSSK) shows a compositional bias: basic residues. Positions 469–479 (SYDKKRSSNDR) are enriched in basic and acidic residues.

Belongs to the DEAD box helicase family. CshA subfamily. In terms of assembly, oligomerizes, may be a member of the RNA degradosome.

The protein localises to the cytoplasm. The catalysed reaction is ATP + H2O = ADP + phosphate + H(+). Its function is as follows. DEAD-box RNA helicase possibly involved in RNA degradation. Unwinds dsRNA in both 5'- and 3'-directions, has RNA-dependent ATPase activity. This is DEAD-box ATP-dependent RNA helicase CshA from Bacillus licheniformis (strain ATCC 14580 / DSM 13 / JCM 2505 / CCUG 7422 / NBRC 12200 / NCIMB 9375 / NCTC 10341 / NRRL NRS-1264 / Gibson 46).